Here is a 53-residue protein sequence, read N- to C-terminus: Tryptophan RNA-binding attenuator protein inhibitory protein (53 aa).

CXXCXGXG motif repeat units lie at residues 12–19 and 26–33; these read CPKCERAG and CPACSGKG.

Homopentamer or homohexamer.

The protein resides in the cytoplasm. By forming a complex with tryptophan-activated TRAP, and masking its RNA binding site, it inhibits TRAP's RNA binding ability, thereby abolishing TRAP regulation of gene expression, leading to antitermination and increased trp operon expression. AT acts by competing with messenger RNA for the RNA binding domain of TRAP. This is Tryptophan RNA-binding attenuator protein inhibitory protein (rtpA) from Bacillus subtilis (strain 168).